The chain runs to 292 residues: 4-hydroxybenzoate solanesyltransferase (292 aa).

The next 9 membrane-spanning stretches (helical) occupy residues 28-48 (LILMIPALWAVCLAAQGLPPL), 49-69 (PLLGTIALGTLATSGLGCVVN), 97-117 (VGIGVALVALLCAAGLAFYLT), 118-138 (PLSFWLCVAAVPVIVAYPGAK), 140-160 (VFPVPQLVLSIAWGFAVLISW), 172-192 (WVLWGATVFWTLGFDTVYAMA), 217-237 (VGIFFALTIGCLFYLGMILML), 239-259 (PLYWLSLAIAIVGWVIQYIQL), and 272-292 (IFGQNVIIGFVLLAGMLLGWL).

Belongs to the UbiA prenyltransferase family. It depends on Mg(2+) as a cofactor.

It is found in the cell inner membrane. It catalyses the reaction all-trans-nonaprenyl diphosphate + 4-hydroxybenzoate = 4-hydroxy-3-(all-trans-nonaprenyl)benzoate + diphosphate. In terms of biological role, catalyzes the prenylation of para-hydroxybenzoate (PHB) with an all-trans polyprenyl group. Mediates the second step in the final reaction sequence of plastoquinone-9 (PQ-9) biosynthesis, which is the condensation of the polyisoprenoid side chain with PHB, generating the first membrane-bound Q intermediate 4-hydroxy-3-solanesylbenzoate. The sequence is that of 4-hydroxybenzoate solanesyltransferase from Synechocystis sp. (strain ATCC 27184 / PCC 6803 / Kazusa).